The chain runs to 927 residues: Translation initiation factor IF-2 (927 aa).

A disordered region spans residues L27–K337. Over residues S49–K69 the composition is skewed to polar residues. 2 stretches are compositionally biased toward basic and acidic residues: residues T70–P86 and F101–H138. Positions G146–R159 are enriched in low complexity. 3 stretches are compositionally biased toward basic and acidic residues: residues N160–Q171, Y202–L226, and A234–V257. The segment covering N300–N316 has biased composition (low complexity). The region spanning E428–K597 is the tr-type G domain. A G1 region spans residues G437 to T444. Residue G437 to T444 participates in GTP binding. The interval G462–H466 is G2. The tract at residues D483–G486 is G3. GTP contacts are provided by residues D483 to H487 and N537 to D540. Residues N537–D540 form a G4 region. Residues S573–K575 are G5.

Belongs to the TRAFAC class translation factor GTPase superfamily. Classic translation factor GTPase family. IF-2 subfamily.

The protein localises to the cytoplasm. One of the essential components for the initiation of protein synthesis. Protects formylmethionyl-tRNA from spontaneous hydrolysis and promotes its binding to the 30S ribosomal subunits. Also involved in the hydrolysis of GTP during the formation of the 70S ribosomal complex. The protein is Translation initiation factor IF-2 of Streptococcus agalactiae serotype V (strain ATCC BAA-611 / 2603 V/R).